The chain runs to 179 residues: uncharacterized protein (179 aa).

Disordered regions lie at residues 26 to 103 and 136 to 179; these read LSAV…SYED and KHKA…SWFN. A compositionally biased stretch (basic and acidic residues) spans 34–61; it reads QQGKNEEQRQHDEWVAERNREIQQEKQR. A compositionally biased stretch (low complexity) spans 63-79; the sequence is ANAQAAANKRAATAAAN. 2 stretches are compositionally biased toward basic and acidic residues: residues 82–103 and 158–179; these read ARQD…SYED and GGRD…SWFN.

This is an uncharacterized protein from Escherichia coli (strain K12).